Reading from the N-terminus, the 578-residue chain is Laccase-10 (578 aa).

A signal peptide spans 1–29; that stretch reads MGARCLALLLLYGTLLLLLLLPQLPLAGA. Plastocyanin-like domains lie at 37–153 and 163–319; these read NVKL…PKAG and KDVP…YAPP. 2 N-linked (GlcNAc...) asparagine glycosylation sites follow: Asn-42 and Asn-83. Cu cation contacts are provided by His-87 and His-89. The N-linked (GlcNAc...) asparagine glycan is linked to Asn-119. Positions 132 and 134 each coordinate Cu cation. N-linked (GlcNAc...) asparagine glycans are attached at residues Asn-192, Asn-208, Asn-244, Asn-307, Asn-336, Asn-384, Asn-392, Asn-402, Asn-438, Asn-445, Asn-448, Asn-451, and Asn-461. Residues 428–562 form the Plastocyanin-like 3 domain; the sequence is DFPASPLEPF…KMAWVVNDGP (135 aa). Cu cation contacts are provided by His-479, His-482, His-484, His-541, Cys-542, His-543, and His-547.

Belongs to the multicopper oxidase family. The cofactor is Cu cation.

It localises to the secreted. The protein localises to the extracellular space. Its subcellular location is the apoplast. It carries out the reaction 4 hydroquinone + O2 = 4 benzosemiquinone + 2 H2O. In terms of biological role, lignin degradation and detoxification of lignin-derived products. In Oryza sativa subsp. japonica (Rice), this protein is Laccase-10 (LAC10).